Reading from the N-terminus, the 995-residue chain is Beta-agarase A (995 aa).

The N-terminal stretch at 1–20 (MKIKFLSAAIAASLALPLSA) is a signal peptide. Residues 936–972 (GTNIGVSHSGPEAPDPGEPVDPPIDPPTPPTGGVTGG) are disordered. Residues 948–965 (APDPGEPVDPPIDPPTPP) are compositionally biased toward pro residues.

Belongs to the glycosyl hydrolase 50 family.

The catalysed reaction is Hydrolysis of (1-&gt;4)-beta-D-galactosidic linkages in agarose, giving the tetramer as the predominant product.. Functionally, hydrolyzes agarose and also neoagarotetraose to yield neoagarobiose. This chain is Beta-agarase A (agaA), found in Vibrio sp. (strain JT0107).